A 143-amino-acid chain; its full sequence is Hemoglobin subunit alpha-2 (143 aa).

Residue Ser-2 is modified to N-acetylserine. The region spanning 2 to 143 is the Globin domain; it reads SLSAKDKATV…LALALSEKYR (142 aa). His-60 is a binding site for O2. His-89 provides a ligand contact to heme b.

It belongs to the globin family. Hb 2 is a heterotetramer of two alpha-2 and two beta-1 chains. Hb 3 is a heterotetramer of two alpha-2 and two beta-2 chains. Red blood cells.

Involved in oxygen transport from gills to the various peripheral tissues. In Boreogadus saida (Polar cod), this protein is Hemoglobin subunit alpha-2 (hba2).